The chain runs to 769 residues: Glutathione biosynthesis bifunctional protein GshAB (769 aa).

The tract at residues 1 to 347 (MLDSFKEDPK…QLADENENNI (347 aa)) is glutamate--cysteine ligase. The region spanning 514–768 (KLVLAEHDIR…IGDKILDFLF (255 aa)) is the ATP-grasp domain. Residue 541–599 (SLFEDKQIVVKPKSTNYGWGISIFKNKFTLEDYQEALNIAFSYDSSVIIEEFIPGDEFR) participates in ATP binding. Mg(2+)-binding residues include Asp-721, Glu-738, and Asn-740. Mn(2+)-binding residues include Asp-721, Glu-738, and Asn-740.

This sequence in the N-terminal section; belongs to the glutamate--cysteine ligase type 1 family. Type 2 subfamily. In terms of assembly, monomer. Mg(2+) serves as cofactor. It depends on Mn(2+) as a cofactor.

It catalyses the reaction L-cysteine + L-glutamate + ATP = gamma-L-glutamyl-L-cysteine + ADP + phosphate + H(+). The catalysed reaction is gamma-L-glutamyl-L-cysteine + glycine + ATP = glutathione + ADP + phosphate + H(+). It participates in sulfur metabolism; glutathione biosynthesis; glutathione from L-cysteine and L-glutamate: step 1/2. The protein operates within sulfur metabolism; glutathione biosynthesis; glutathione from L-cysteine and L-glutamate: step 2/2. Functionally, synthesizes glutathione from L-glutamate and L-cysteine via gamma-L-glutamyl-L-cysteine. This Listeria monocytogenes serotype 4b (strain F2365) protein is Glutathione biosynthesis bifunctional protein GshAB.